The sequence spans 390 residues: Galactokinase (390 aa).

33 to 36 (EHTD) contributes to the substrate binding site. ATP-binding positions include Ser-67 and 124 to 130 (GSGLSSS). Positions 130 and 162 each coordinate Mg(2+). Asp-174 acts as the Proton acceptor in catalysis. Tyr-224 provides a ligand contact to substrate.

Belongs to the GHMP kinase family. GalK subfamily.

It localises to the cytoplasm. It catalyses the reaction alpha-D-galactose + ATP = alpha-D-galactose 1-phosphate + ADP + H(+). The protein operates within carbohydrate metabolism; galactose metabolism. In terms of biological role, catalyzes the transfer of the gamma-phosphate of ATP to D-galactose to form alpha-D-galactose-1-phosphate (Gal-1-P). The polypeptide is Galactokinase (Streptococcus mutans serotype c (strain ATCC 700610 / UA159)).